Here is a 501-residue protein sequence, read N- to C-terminus: Ribose import ATP-binding protein RbsA (501 aa).

ABC transporter domains follow at residues 5–241 (LQLQ…VGRK) and 252–495 (APGE…VGKQ). 37–44 (GENGAGKS) is an ATP binding site.

Belongs to the ABC transporter superfamily. Ribose importer (TC 3.A.1.2.1) family. In terms of assembly, the complex is composed of an ATP-binding protein (RbsA), two transmembrane proteins (RbsC) and a solute-binding protein (RbsB).

The protein localises to the cell inner membrane. It catalyses the reaction D-ribose(out) + ATP + H2O = D-ribose(in) + ADP + phosphate + H(+). Functionally, part of the ABC transporter complex RbsABC involved in ribose import. Responsible for energy coupling to the transport system. The polypeptide is Ribose import ATP-binding protein RbsA (Pectobacterium atrosepticum (strain SCRI 1043 / ATCC BAA-672) (Erwinia carotovora subsp. atroseptica)).